The sequence spans 28 residues: Expansin-B1 (28 aa).

Residues 11-28 enclose the Expansin-like CBD domain; it reads MLLSLQGPXSLRMVSESG.

Belongs to the expansin family. Expansin B subfamily.

The protein resides in the secreted. Its subcellular location is the cell wall. The protein localises to the membrane. May cause loosening and extension of plant cell walls by disrupting non-covalent bonding between cellulose microfibrils and matrix glucans. The polypeptide is Expansin-B1 (Pseudotsuga menziesii (Douglas-fir)).